The chain runs to 666 residues: Probable potassium transport system protein Kup (666 aa).

12 consecutive transmembrane segments (helical) span residues 16–36 (GFIIALGIVYGDIGTSPLYTM), 58–78 (ISLIIWTLTLITTIKYVLVAL), 99–119 (TPWLIVPAVIGGATLLSDGAL), 141–161 (IFQNQSNVIFATLFILLLLFA), 167–187 (TGVIGKLFGPIMFIWFAFLGI), 221–241 (IFILGSIFLATTGAEALYSDL), 253–273 (WPFVKVAIILSYCGQGAWILA), 292–312 (FTMHVVILATLAAIIASQALI), 343–363 (TYIPVINWFLFAITTSIVLLF), 373–393 (YGLAITITMLMTTILLSFFLI), 402–422 (VLLMMIFFGILEGIFFLASAV), and 424–444 (FMHGGYVVVIIAVAIIFIMTI).

Belongs to the HAK/KUP transporter (TC 2.A.72) family.

The protein resides in the cell membrane. The enzyme catalyses K(+)(in) + H(+)(in) = K(+)(out) + H(+)(out). Transport of potassium into the cell. Likely operates as a K(+):H(+) symporter. This is Probable potassium transport system protein Kup from Streptococcus agalactiae serotype Ia (strain ATCC 27591 / A909 / CDC SS700).